We begin with the raw amino-acid sequence, 548 residues long: Chaperonin GroEL 2 (548 aa).

Residues 30 to 33, Lys51, 87 to 91, Gly415, 479 to 481, and Asp495 contribute to the ATP site; these read TLGP, DGTTT, and NAA. The tract at residues 524-548 is disordered; the sequence is APKDAPPTAPAGVPGAGAGGPGFDF. Residues 537 to 548 are compositionally biased toward gly residues; sequence PGAGAGGPGFDF.

It belongs to the chaperonin (HSP60) family. As to quaternary structure, forms a cylinder of 14 subunits composed of two heptameric rings stacked back-to-back. Interacts with the co-chaperonin GroES.

The protein resides in the cytoplasm. It catalyses the reaction ATP + H2O + a folded polypeptide = ADP + phosphate + an unfolded polypeptide.. Functionally, together with its co-chaperonin GroES, plays an essential role in assisting protein folding. The GroEL-GroES system forms a nano-cage that allows encapsulation of the non-native substrate proteins and provides a physical environment optimized to promote and accelerate protein folding. The polypeptide is Chaperonin GroEL 2 (Burkholderia pseudomallei (strain 668)).